The sequence spans 321 residues: Pirin-like protein 2 (321 aa).

Fe cation is bound by residues His88, His90, His132, and Glu134.

The protein belongs to the pirin family. Interacts with RD21A, RD21B and XCP2.

Its subcellular location is the cytoplasm. The protein localises to the cytosol. It localises to the nucleus. In terms of biological role, involved in susceptibility to the bacterial plant pathogen Ralstonia solanacearum. Stabilizes the xylem cysteine protease XCP2 by blocking its autolysis. In Arabidopsis thaliana (Mouse-ear cress), this protein is Pirin-like protein 2.